A 156-amino-acid polypeptide reads, in one-letter code: MNINATLIGQSVAFLIFVLFCMKYVWPPVITALQERQKKIADGLDAANRAARDLELAQEKAGQQLREAKAQAAEIIEQSKKRAAQLVEEAREQARVEADRVKAQALAEIEQELNSAKDALRAQVGALAVGGAEKILGATIDQNAHAELVNKLAAEI.

Residues 12–32 (VAFLIFVLFCMKYVWPPVITA) form a helical membrane-spanning segment.

It belongs to the ATPase B chain family. F-type ATPases have 2 components, F(1) - the catalytic core - and F(0) - the membrane proton channel. F(1) has five subunits: alpha(3), beta(3), gamma(1), delta(1), epsilon(1). F(0) has three main subunits: a(1), b(2) and c(10-14). The alpha and beta chains form an alternating ring which encloses part of the gamma chain. F(1) is attached to F(0) by a central stalk formed by the gamma and epsilon chains, while a peripheral stalk is formed by the delta and b chains.

Its subcellular location is the cell inner membrane. Functionally, f(1)F(0) ATP synthase produces ATP from ADP in the presence of a proton or sodium gradient. F-type ATPases consist of two structural domains, F(1) containing the extramembraneous catalytic core and F(0) containing the membrane proton channel, linked together by a central stalk and a peripheral stalk. During catalysis, ATP synthesis in the catalytic domain of F(1) is coupled via a rotary mechanism of the central stalk subunits to proton translocation. Its function is as follows. Component of the F(0) channel, it forms part of the peripheral stalk, linking F(1) to F(0). The sequence is that of ATP synthase subunit b from Pseudomonas putida (strain ATCC 700007 / DSM 6899 / JCM 31910 / BCRC 17059 / LMG 24140 / F1).